We begin with the raw amino-acid sequence, 296 residues long: 33 kDa chaperonin (296 aa).

Cystine bridges form between Cys238–Cys240 and Cys271–Cys274.

The protein belongs to the HSP33 family. Under oxidizing conditions two disulfide bonds are formed involving the reactive cysteines. Under reducing conditions zinc is bound to the reactive cysteines and the protein is inactive.

The protein localises to the cytoplasm. Functionally, redox regulated molecular chaperone. Protects both thermally unfolding and oxidatively damaged proteins from irreversible aggregation. Plays an important role in the bacterial defense system toward oxidative stress. In Clostridium botulinum (strain ATCC 19397 / Type A), this protein is 33 kDa chaperonin.